A 433-amino-acid polypeptide reads, in one-letter code: 26S proteasome regulatory subunit 7 (433 aa).

The tract at residues Met-1–Arg-23 is disordered. A compositionally biased stretch (basic and acidic residues) spans Asp-8–Arg-23. Gly-216–Thr-223 contacts ATP.

This sequence belongs to the AAA ATPase family. Phosphorylated. Dephosphorylated by ublcp1 which impairs psmc2 ATPase activity and disrupts 26S proteasome assembly.

Its subcellular location is the cytoplasm. It is found in the nucleus. Functionally, the 26S proteasome is involved in the ATP-dependent degradation of ubiquitinated proteins. The regulatory (or ATPase) complex confers ATP dependency and substrate specificity to the 26S complex. The polypeptide is 26S proteasome regulatory subunit 7 (psmc2) (Xenopus laevis (African clawed frog)).